Reading from the N-terminus, the 837-residue chain is Semaphorin-4G (837 aa).

The signal sequence occupies residues 1–17 (MWGRLWPLLFSFLTVTA). The Extracellular segment spans residues 18-673 (VPGPSLRRPS…GAQLAHDMRM (656 aa)). The 469-residue stretch at 35 to 503 (RLTISYEELS…AASGVLQFPL (469 aa)) folds into the Sema domain. N-linked (GlcNAc...) asparagine glycans are attached at residues N55, N111, and N126. A disulfide bond links C104 and C115. Intrachain disulfides connect C133–C142, C268–C375, and C292–C335. N386 is a glycosylation site (N-linked (GlcNAc...) asparagine). In terms of domain architecture, PSI spans 505 to 556 (SCSRYQSCYDCILARDPYCGWDSSIHACMVATTVANRTELIQDIERGNRGCE). Intrachain disulfides connect C506-C523 and C515-C532. 2 N-linked (GlcNAc...) asparagine glycosylation sites follow: N540 and N596. One can recognise an Ig-like C2-type domain in the interval 565-647 (PPLKTRSVLR…RMLLASYSLT (83 aa)). C582 and C630 are disulfide-bonded. Residues 674–694 (FYVVAIAILGGLCLILASSLL) traverse the membrane as a helical segment. The Cytoplasmic segment spans residues 695–837 (YVACLKGGRR…LVEQLDESSV (143 aa)). The disordered stretch occupies residues 721-776 (SAVQLQTVSGQCPGEEDEGDDGEGTGGLESGCLQIIPGEGAPAPPPPPPPPPPAEL). Acidic residues predominate over residues 734-743 (GEEDEGDDGE). Residues 762–774 (PAPPPPPPPPPPA) are compositionally biased toward pro residues. S794 and S836 each carry phosphoserine.

This sequence belongs to the semaphorin family. As to quaternary structure, interacts with PLXNB2. As to expression, brain, spinal cord, and several sensory organs as well as specific populations of projection neurons.

It is found in the cell membrane. Its function is as follows. Cell surface receptor for PLXNB2. May play a role in axon guidance. The sequence is that of Semaphorin-4G (Sema4g) from Mus musculus (Mouse).